The following is a 1038-amino-acid chain: TonB-dependent receptor P39 (1038 aa).

An N-terminal signal peptide occupies residues 1-39 (MFKQKLKMKPKIKRNCTFSGLAFILMLLFSSFTVNNLNA). Positions 120-127 (DEVVVIGY) match the TonB box motif. The TBDR plug domain maps to 131 to 243 (KRADVIGAVG…ANGVVLITTK (113 aa)). One can recognise a TBDR beta-barrel domain in the interval 249 to 1038 (FPKMTVDYIS…EIVIGLNVEF (790 aa)). The TonB C-terminal box signature appears at 1021 to 1038 (SLRYPNQTEIVIGLNVEF).

The protein belongs to the TonB-dependent receptor family.

The protein localises to the cell outer membrane. Its function is as follows. TonB-dependent receptor probably involved in ulvan degradation. Ulvan is the main polysaccharide component of the Ulvales (green seaweed) cell wall. It is composed of disaccharide building blocks comprising 3-sulfated rhamnose (Rha3S) linked to D-glucuronic acid (GlcA), L-iduronic acid (IduA), or D-xylose (Xyl). The TonB-dependent receptor may mediate transport of ulvan oligosaccharides from the surface of the outer membrane to the periplasm for subsequent degradation. The sequence is that of TonB-dependent receptor P39 from Formosa agariphila (strain DSM 15362 / KCTC 12365 / LMG 23005 / KMM 3901 / M-2Alg 35-1).